We begin with the raw amino-acid sequence, 109 residues long: Anther-specific protein MZm3-3 (109 aa).

Positions 1–41 (MTATTTTAAGGGKVQPRGLPVALSLLLLLVLAAGLGGGAEA) are cleaved as a signal peptide. 4 cysteine pairs are disulfide-bonded: Cys45-Cys86, Cys55-Cys75, Cys76-Cys101, and Cys88-Cys108.

Belongs to the A9/FIL1 family. In terms of tissue distribution, tapetum of anthers.

Its subcellular location is the secreted. This is Anther-specific protein MZm3-3 from Zea mays (Maize).